The following is a 319-amino-acid chain: Urease accessory protein UreD (319 aa).

The segment at 284 to 319 (RLSTPQPPREWPLQEEGTFSNERFTKDHQSPSASPH) is disordered.

Belongs to the UreD family. In terms of assembly, ureD, UreF and UreG form a complex that acts as a GTP-hydrolysis-dependent molecular chaperone, activating the urease apoprotein by helping to assemble the nickel containing metallocenter of UreC. The UreE protein probably delivers the nickel.

It localises to the cytoplasm. Functionally, required for maturation of urease via the functional incorporation of the urease nickel metallocenter. In Prochlorococcus marinus (strain MIT 9313), this protein is Urease accessory protein UreD.